A 468-amino-acid polypeptide reads, in one-letter code: uncharacterized protein (468 aa).

The signal sequence occupies residues 1–19; it reads MRVLSVLLVALTVAGSAYS. Asn86 and Asn334 each carry an N-linked (GlcNAc...) asparagine glycan. Residues 401-421 are disordered; it reads NPSTNLPETSPPTEQPTAPPA. The span at 409–421 shows a compositional bias: pro residues; it reads TSPPTEQPTAPPA. The N-linked (GlcNAc...) asparagine glycan is linked to Asn435. Residue Asn444 is the site of GPI-like-anchor amidated asparagine attachment. A propeptide spans 445 to 468 (removed in mature form); sequence SASSIEMSKLVVAILSLFILAFFH.

The protein resides in the cell membrane. This is an uncharacterized protein from Dictyostelium discoideum (Social amoeba).